Consider the following 142-residue polypeptide: 3-hydroxyacyl-[acyl-carrier-protein] dehydratase FabZ (142 aa).

The active site involves histidine 48.

Belongs to the thioester dehydratase family. FabZ subfamily.

The protein resides in the cytoplasm. The enzyme catalyses a (3R)-hydroxyacyl-[ACP] = a (2E)-enoyl-[ACP] + H2O. In terms of biological role, involved in unsaturated fatty acids biosynthesis. Catalyzes the dehydration of short chain beta-hydroxyacyl-ACPs and long chain saturated and unsaturated beta-hydroxyacyl-ACPs. In Ruminiclostridium cellulolyticum (strain ATCC 35319 / DSM 5812 / JCM 6584 / H10) (Clostridium cellulolyticum), this protein is 3-hydroxyacyl-[acyl-carrier-protein] dehydratase FabZ.